Consider the following 554-residue polypeptide: CTP synthase (554 aa).

Residues 1 to 265 (MTPLIFVTGG…DEIVVNQLKL (265 aa)) form an amidoligase domain region. Ser-13 lines the CTP pocket. Residue Ser-13 participates in UTP binding. ATP is bound at residue 14-19 (SLGKGI). The Mg(2+) site is built by Asp-71 and Glu-139. CTP contacts are provided by residues 146–148 (DIE), 186–191 (KTKPTQ), and Lys-222. UTP is bound by residues 186–191 (KTKPTQ) and Lys-222. The Glutamine amidotransferase type-1 domain occupies 292–545 (TIAVVGKYVD…IRAARERKAG (254 aa)). Gly-353 is an L-glutamine binding site. Cys-380 (nucleophile; for glutamine hydrolysis) is an active-site residue. L-glutamine contacts are provided by residues 381 to 384 (YGMQ), Glu-404, and Arg-471. Residues His-518 and Glu-520 contribute to the active site.

Belongs to the CTP synthase family. Homotetramer.

The catalysed reaction is UTP + L-glutamine + ATP + H2O = CTP + L-glutamate + ADP + phosphate + 2 H(+). The enzyme catalyses L-glutamine + H2O = L-glutamate + NH4(+). It catalyses the reaction UTP + NH4(+) + ATP = CTP + ADP + phosphate + 2 H(+). Its pathway is pyrimidine metabolism; CTP biosynthesis via de novo pathway; CTP from UDP: step 2/2. Its activity is regulated as follows. Allosterically activated by GTP, when glutamine is the substrate; GTP has no effect on the reaction when ammonia is the substrate. The allosteric effector GTP functions by stabilizing the protein conformation that binds the tetrahedral intermediate(s) formed during glutamine hydrolysis. Inhibited by the product CTP, via allosteric rather than competitive inhibition. Catalyzes the ATP-dependent amination of UTP to CTP with either L-glutamine or ammonia as the source of nitrogen. Regulates intracellular CTP levels through interactions with the four ribonucleotide triphosphates. The sequence is that of CTP synthase from Stenotrophomonas maltophilia (strain K279a).